We begin with the raw amino-acid sequence, 289 residues long: ATP synthase gamma chain (289 aa).

It belongs to the ATPase gamma chain family. As to quaternary structure, F-type ATPases have 2 components, CF(1) - the catalytic core - and CF(0) - the membrane proton channel. CF(1) has five subunits: alpha(3), beta(3), gamma(1), delta(1), epsilon(1). CF(0) has three main subunits: a, b and c.

It localises to the cell inner membrane. In terms of biological role, produces ATP from ADP in the presence of a proton gradient across the membrane. The gamma chain is believed to be important in regulating ATPase activity and the flow of protons through the CF(0) complex. The polypeptide is ATP synthase gamma chain (Coxiella burnetii (strain Dugway 5J108-111)).